The primary structure comprises 211 residues: Scoloptoxin SSD43 (211 aa).

A signal peptide spans 1–20 (MNFVIYGVIVVLTSQLYVDG).

Post-translationally, contains 3 disulfide bonds. As to expression, expressed by the venom gland.

It localises to the secreted. Shows trypsin inhibiting activity. The protein is highly thermally stable, since its incubation in boiling water during 10 minutes does not reduce its activity. This is Scoloptoxin SSD43 from Scolopendra dehaani (Thai centipede).